Reading from the N-terminus, the 860-residue chain is Ras GTPase-activating-like protein gapA (860 aa).

Residues 1-20 (MEGLEIEDEDVILLDEDDDS) are compositionally biased toward acidic residues. The tract at residues 1 to 48 (MEGLEIEDEDVILLDEDDDSSSSSTVNNSSSNIKNNGNTNNNIGNDDS) is disordered. Low complexity predominate over residues 21 to 46 (SSSSTVNNSSSNIKNNGNTNNNIGND). Residues 146 to 185 (AEIQELKRNMVAEIRRNHLLERDVNKLDKRIALLIKHRSN) adopt a coiled-coil conformation. The region spanning 269-515 (FLILSLFRLA…SIVRQYLEDL (247 aa)) is the Ras-GAP domain. Positions 663–732 (NNPQLSSNAE…TIALRDLRKH (70 aa)) form a coiled coil.

As to quaternary structure, heterotetramer. Quaternary complex with activated rac1A, ctxA and ctxB in the absence of rgaA.

Part of signaling pathway that is required for completion of cytokinesis. gapA and rgaA control cortexillin localization to the cleavage furrow and hence may be involved in cleavage of the midbody in the final stage of cytokinesis by regulating the actin cytoskeleton. Forms a complex by linking activated rac1A to ctxA in the absence of rgaA. Assembly of this complex is necessary for the recruitment of cortexillin to the midzone of the dividing cell. The protein is Ras GTPase-activating-like protein gapA (gapA) of Dictyostelium discoideum (Social amoeba).